Reading from the N-terminus, the 176-residue chain is Crossover junction endodeoxyribonuclease RuvC (176 aa).

Catalysis depends on residues D8, E69, and D141. The Mg(2+) site is built by D8, E69, and D141.

It belongs to the RuvC family. Homodimer which binds Holliday junction (HJ) DNA. The HJ becomes 2-fold symmetrical on binding to RuvC with unstacked arms; it has a different conformation from HJ DNA in complex with RuvA. In the full resolvosome a probable DNA-RuvA(4)-RuvB(12)-RuvC(2) complex forms which resolves the HJ. Mg(2+) serves as cofactor.

It localises to the cytoplasm. The enzyme catalyses Endonucleolytic cleavage at a junction such as a reciprocal single-stranded crossover between two homologous DNA duplexes (Holliday junction).. In terms of biological role, the RuvA-RuvB-RuvC complex processes Holliday junction (HJ) DNA during genetic recombination and DNA repair. Endonuclease that resolves HJ intermediates. Cleaves cruciform DNA by making single-stranded nicks across the HJ at symmetrical positions within the homologous arms, yielding a 5'-phosphate and a 3'-hydroxyl group; requires a central core of homology in the junction. The consensus cleavage sequence is 5'-(A/T)TT(C/G)-3'. Cleavage occurs on the 3'-side of the TT dinucleotide at the point of strand exchange. HJ branch migration catalyzed by RuvA-RuvB allows RuvC to scan DNA until it finds its consensus sequence, where it cleaves and resolves the cruciform DNA. The sequence is that of Crossover junction endodeoxyribonuclease RuvC from Pseudomonas syringae pv. tomato (strain ATCC BAA-871 / DC3000).